The following is a 244-amino-acid chain: Glucosamine-6-phosphate deaminase (244 aa).

Residue D67 is the Proton acceptor; for enolization step of the active site. N136 functions as the For ring-opening step in the catalytic mechanism. Residue H138 is the Proton acceptor; for ring-opening step of the active site. E143 (for ring-opening step) is an active-site residue.

This sequence belongs to the glucosamine/galactosamine-6-phosphate isomerase family. NagB subfamily.

The catalysed reaction is alpha-D-glucosamine 6-phosphate + H2O = beta-D-fructose 6-phosphate + NH4(+). It participates in amino-sugar metabolism; N-acetylneuraminate degradation; D-fructose 6-phosphate from N-acetylneuraminate: step 5/5. In terms of biological role, catalyzes the reversible isomerization-deamination of glucosamine 6-phosphate (GlcN6P) to form fructose 6-phosphate (Fru6P) and ammonium ion. The protein is Glucosamine-6-phosphate deaminase of Clostridium botulinum (strain ATCC 19397 / Type A).